Here is an 81-residue protein sequence, read N- to C-terminus: MNDVFSTAQHKLDALGLRCPEPVMMVRKTVRQMAQGETLLIIADDPATTRDIPSFCEFMDHTLIASETMQTPYQYLIKKGL.

The active-site Cysteine persulfide intermediate is cysteine 19.

This sequence belongs to the sulfur carrier protein TusA family.

Its subcellular location is the cytoplasm. Functionally, sulfur carrier protein which probably makes part of a sulfur-relay system. In Shewanella oneidensis (strain ATCC 700550 / JCM 31522 / CIP 106686 / LMG 19005 / NCIMB 14063 / MR-1), this protein is Sulfur carrier protein TusA.